A 285-amino-acid polypeptide reads, in one-letter code: Bifunctional protein FolD (285 aa).

NADP(+)-binding positions include 165 to 167 and Ser190; that span reads GRS.

This sequence belongs to the tetrahydrofolate dehydrogenase/cyclohydrolase family. In terms of assembly, homodimer.

The enzyme catalyses (6R)-5,10-methylene-5,6,7,8-tetrahydrofolate + NADP(+) = (6R)-5,10-methenyltetrahydrofolate + NADPH. It catalyses the reaction (6R)-5,10-methenyltetrahydrofolate + H2O = (6R)-10-formyltetrahydrofolate + H(+). It functions in the pathway one-carbon metabolism; tetrahydrofolate interconversion. Its function is as follows. Catalyzes the oxidation of 5,10-methylenetetrahydrofolate to 5,10-methenyltetrahydrofolate and then the hydrolysis of 5,10-methenyltetrahydrofolate to 10-formyltetrahydrofolate. In Burkholderia orbicola (strain AU 1054), this protein is Bifunctional protein FolD.